Consider the following 329-residue polypeptide: GTP 3',8-cyclase (329 aa).

The 229-residue stretch at 1–229 (MNPVDYLRIS…ESTIKGNGPA (229 aa)) folds into the Radical SAM core domain. Arginine 8 is a binding site for GTP. Residues cysteine 15 and cysteine 19 each contribute to the [4Fe-4S] cluster site. S-adenosyl-L-methionine is bound at residue tyrosine 21. A [4Fe-4S] cluster-binding site is contributed by cysteine 22. Arginine 60 provides a ligand contact to GTP. Glycine 64 serves as a coordination point for S-adenosyl-L-methionine. Threonine 91 lines the GTP pocket. Residue serine 115 participates in S-adenosyl-L-methionine binding. Lysine 155 contacts GTP. An S-adenosyl-L-methionine-binding site is contributed by methionine 189. [4Fe-4S] cluster is bound by residues cysteine 252 and cysteine 255. A GTP-binding site is contributed by 257–259 (RMR). Residue cysteine 269 participates in [4Fe-4S] cluster binding.

The protein belongs to the radical SAM superfamily. MoaA family. In terms of assembly, monomer and homodimer. [4Fe-4S] cluster serves as cofactor.

It carries out the reaction GTP + AH2 + S-adenosyl-L-methionine = (8S)-3',8-cyclo-7,8-dihydroguanosine 5'-triphosphate + 5'-deoxyadenosine + L-methionine + A + H(+). It participates in cofactor biosynthesis; molybdopterin biosynthesis. Functionally, catalyzes the cyclization of GTP to (8S)-3',8-cyclo-7,8-dihydroguanosine 5'-triphosphate. The protein is GTP 3',8-cyclase of Rippkaea orientalis (strain PCC 8801 / RF-1) (Cyanothece sp. (strain PCC 8801)).